Consider the following 99-residue polypeptide: Late cornified envelope protein 4A (99 aa).

The disordered stretch occupies residues 78-99; sequence CYGSGSGQQSGGSGCCSGGGCC. Residues 81-99 show a composition bias toward gly residues; that stretch reads SGSGQQSGGSGCCSGGGCC.

It belongs to the LCE family. Interacts with CYSRT1; the interaction is direct. In terms of tissue distribution, skin-specific. Expression was readily detected in adult trunk skin, adult arm skin, fetal skin, penal skin, vulva, esophagus and tongue. Not expressed in the cervix, rectum, lung, colon, or placenta.

In terms of biological role, precursors of the cornified envelope of the stratum corneum. The protein is Late cornified envelope protein 4A (LCE4A) of Homo sapiens (Human).